Here is an 888-residue protein sequence, read N- to C-terminus: Alanine--tRNA ligase (888 aa).

Positions 573, 577, 676, and 680 each coordinate Zn(2+).

Belongs to the class-II aminoacyl-tRNA synthetase family. Zn(2+) is required as a cofactor.

Its subcellular location is the cytoplasm. It carries out the reaction tRNA(Ala) + L-alanine + ATP = L-alanyl-tRNA(Ala) + AMP + diphosphate. In terms of biological role, catalyzes the attachment of alanine to tRNA(Ala) in a two-step reaction: alanine is first activated by ATP to form Ala-AMP and then transferred to the acceptor end of tRNA(Ala). Also edits incorrectly charged Ser-tRNA(Ala) and Gly-tRNA(Ala) via its editing domain. This Corynebacterium glutamicum (strain ATCC 13032 / DSM 20300 / JCM 1318 / BCRC 11384 / CCUG 27702 / LMG 3730 / NBRC 12168 / NCIMB 10025 / NRRL B-2784 / 534) protein is Alanine--tRNA ligase.